The sequence spans 347 residues: Rhodopsin (347 aa).

The Extracellular segment spans residues 1-33 (TEGPDFYIPMVNTTGVVRSPYEYPQYYLVNPAA). Asparagine 12 is a glycosylation site (N-linked (GlcNAc...) asparagine). A helical transmembrane segment spans residues 34-58 (FAVLGAYMFFLIIIGFPINFLTLYV). At 59–70 (TLEHKKLRTPLN) the chain is on the cytoplasmic side. The helical transmembrane segment at 71–93 (YILLNLAVADLFMVIGGFTTTMY) threads the bilayer. Residues 94-107 (SSMHGYFVLGRLGC) lie on the Extracellular side of the membrane. Cysteine 107 and cysteine 184 are disulfide-bonded. The helical transmembrane segment at 108–130 (NIEGFFATLGGMISLWSLAVLAI) threads the bilayer. A 'Ionic lock' involved in activated form stabilization motif is present at residues 131-133 (ERW). Topologically, residues 131–149 (ERWVVVCKPISNFRFGENH) are cytoplasmic. A helical membrane pass occupies residues 150–170 (AIMGVSLTWVMALACTVPPLV). The Extracellular portion of the chain corresponds to 171–199 (GWSRYIPEGMQCACGIDYYTRAEGYNNES). An N-linked (GlcNAc...) asparagine glycan is attached at asparagine 197. A helical membrane pass occupies residues 200–221 (FVIYMFTFHFLFPMFIIFFCYG). The Cytoplasmic segment spans residues 222–249 (RLLCAVKEAAAAQQESETTQRAEREVTR). A helical transmembrane segment spans residues 250–271 (MVILMVIGYLVCWLPYASVAWF). The Extracellular portion of the chain corresponds to 272-283 (IFTHKGSEFGPL). Residues 284–305 (FMAVPSFFAKSSSIYNPIIYIC) traverse the membrane as a helical segment. Residue lysine 293 is modified to N6-(retinylidene)lysine. Residues 306–347 (MNKQFRQCMITTLFCGKNPFEGQEEDSSTKTEASSASSVSPA) lie on the Cytoplasmic side of the membrane. A lipid anchor (S-palmitoyl cysteine) is attached at cysteine 320. Residues 326–347 (EGQEEDSSTKTEASSASSVSPA) are disordered. Low complexity predominate over residues 335 to 347 (KTEASSASSVSPA).

This sequence belongs to the G-protein coupled receptor 1 family. Opsin subfamily. Post-translationally, phosphorylated on some or all of the serine and threonine residues present in the C-terminal region. Contains one covalently linked retinal chromophore.

It localises to the membrane. The protein resides in the cell projection. The protein localises to the cilium. It is found in the photoreceptor outer segment. Functionally, photoreceptor required for image-forming vision at low light intensity. While most salt water fish species use retinal as chromophore, most freshwater fish use 3-dehydroretinal, or a mixture of retinal and 3-dehydroretinal. Light-induced isomerization of 11-cis to all-trans retinal triggers a conformational change that activates signaling via G-proteins. Subsequent receptor phosphorylation mediates displacement of the bound G-protein alpha subunit by arrestin and terminates signaling. The polypeptide is Rhodopsin (rho) (Sargocentron tiere (Blue lined squirrelfish)).